An 865-amino-acid polypeptide reads, in one-letter code: Leucine--tRNA ligase (865 aa).

A 'HIGH' region motif is present at residues 58 to 68 (PYPSGNLHMGH). The short motif at 629-633 (KMSKS) is the 'KMSKS' region element. Lys-632 is an ATP binding site.

This sequence belongs to the class-I aminoacyl-tRNA synthetase family.

It localises to the cytoplasm. The catalysed reaction is tRNA(Leu) + L-leucine + ATP = L-leucyl-tRNA(Leu) + AMP + diphosphate. The polypeptide is Leucine--tRNA ligase (Synechococcus sp. (strain ATCC 27144 / PCC 6301 / SAUG 1402/1) (Anacystis nidulans)).